Consider the following 602-residue polypeptide: Potassium-transporting ATPase potassium-binding subunit (602 aa).

10 helical membrane passes run 3–23 (ANNLLQAAIFIVVLIAAAVPV), 64–84 (QYALATVAFNALGVLFLYALL), 135–155 (GLTVQNFLSAATGIVVVLALI), 178–198 (LYVLVPMAAIIAALLMSQGVI), 282–302 (FSNFLEIFAILIIPAALCLVF), 313–333 (VAVLAAMTVALAAAIGIETSA), 418–438 (GLYGMLVFALLAVFVAGLMIG), 456–476 (VSIVVLLTPLLVLVGTSIAVL), 522–542 (WMTAIAMWFGRFGTIVPVLAI), and 565–585 (LFVVLLLGTVLLVGALTYMPA).

This sequence belongs to the KdpA family. As to quaternary structure, the system is composed of three essential subunits: KdpA, KdpB and KdpC.

The protein localises to the cell inner membrane. Part of the high-affinity ATP-driven potassium transport (or Kdp) system, which catalyzes the hydrolysis of ATP coupled with the electrogenic transport of potassium into the cytoplasm. This subunit binds the periplasmic potassium ions and delivers the ions to the membrane domain of KdpB through an intramembrane tunnel. This chain is Potassium-transporting ATPase potassium-binding subunit, found in Burkholderia mallei (strain ATCC 23344).